The primary structure comprises 161 residues: Peptidyl-prolyl cis-trans isomerase-like 3 (161 aa).

Residues 1 to 154 (MAVTLHTDVG…NDVHIKDITI (154 aa)) enclose the PPIase cyclophilin-type domain.

Belongs to the cyclophilin-type PPIase family. PPIL3 subfamily.

The catalysed reaction is [protein]-peptidylproline (omega=180) = [protein]-peptidylproline (omega=0). In terms of biological role, PPIases accelerate the folding of proteins. It catalyzes the cis-trans isomerization of proline imidic peptide bonds in oligopeptides. The protein is Peptidyl-prolyl cis-trans isomerase-like 3 (PPIL3) of Gallus gallus (Chicken).